Reading from the N-terminus, the 153-residue chain is 6,7-dimethyl-8-ribityllumazine synthase (153 aa).

5-amino-6-(D-ribitylamino)uracil contacts are provided by residues F22, 56-58 (AFE), and 80-82 (TVI). 85–86 (ST) lines the (2S)-2-hydroxy-3-oxobutyl phosphate pocket. The active-site Proton donor is the H88. F113 lines the 5-amino-6-(D-ribitylamino)uracil pocket. R127 is a (2S)-2-hydroxy-3-oxobutyl phosphate binding site.

Belongs to the DMRL synthase family. In terms of assembly, forms an icosahedral capsid composed of 60 subunits, arranged as a dodecamer of pentamers.

The enzyme catalyses (2S)-2-hydroxy-3-oxobutyl phosphate + 5-amino-6-(D-ribitylamino)uracil = 6,7-dimethyl-8-(1-D-ribityl)lumazine + phosphate + 2 H2O + H(+). It functions in the pathway cofactor biosynthesis; riboflavin biosynthesis; riboflavin from 2-hydroxy-3-oxobutyl phosphate and 5-amino-6-(D-ribitylamino)uracil: step 1/2. Functionally, catalyzes the formation of 6,7-dimethyl-8-ribityllumazine by condensation of 5-amino-6-(D-ribitylamino)uracil with 3,4-dihydroxy-2-butanone 4-phosphate. This is the penultimate step in the biosynthesis of riboflavin. This Actinobacillus pleuropneumoniae serotype 3 (strain JL03) protein is 6,7-dimethyl-8-ribityllumazine synthase.